We begin with the raw amino-acid sequence, 62 residues long: Beta-defensin 37 (62 aa).

Residues 1–16 (MKFSYFLLLLLSLSNF) form the signal peptide. Disulfide bonds link C29–C58, C36–C51, and C41–C59.

The protein belongs to the beta-defensin family. Only expressed in epididymis (corpus and cauda).

The protein resides in the secreted. In terms of biological role, has antibacterial activity. The protein is Beta-defensin 37 (Defb37) of Mus musculus (Mouse).